A 338-amino-acid polypeptide reads, in one-letter code: MEHKLFSSYVVKGVTLKNRIVMSPMCMYSSDQKDGKIRPFHISHYESRAAGQVGLIIVEATAVTPQGRISPYDLGIWSDDHISGLTETVERIHAHGAKAAIQLAHAGRKAELDGPIIAPSAISYDKMKTPDAMTEEQISETIEAFKLGALRAKKAGFDIIEIHGAHGYLINEFLSPLTNKRTDAYGGSLENRYRLLREIISEIQTVWDGPLFVRISAAEYAEGGNELSDFITLAKWMKKQGIDLIDCSSGAVVPAPIPVYPGYQVPLAEAIRHEANIATGAVGLITSGIQAEEILQNERADLIFVARELLRNPYWPREAALELGTTISGPSQYDRAWL.

Residue 23-26 participates in FMN binding; it reads SPMC. Y28 is a substrate binding site. A60 and Q102 together coordinate FMN. 163–166 is a binding site for substrate; sequence HGAH. FMN contacts are provided by residues R214 and 306–307; that span reads AR.

This sequence belongs to the NADH:flavin oxidoreductase/NADH oxidase family. NamA subfamily. In terms of assembly, homotetramer. The cofactor is FMN.

The enzyme catalyses A + NADPH + H(+) = AH2 + NADP(+). Catalyzes the reduction of the double bond of an array of alpha,beta-unsaturated aldehydes and ketones. It also reduces the nitro group of nitroester and nitroaromatic compounds. It could have a role in detoxification processes. This is NADPH dehydrogenase from Halalkalibacterium halodurans (strain ATCC BAA-125 / DSM 18197 / FERM 7344 / JCM 9153 / C-125) (Bacillus halodurans).